The primary structure comprises 184 residues: Photosystem I assembly protein Ycf4 (184 aa).

Helical transmembrane passes span 21-43 (NFCW…ISSY) and 68-90 (FYGI…NVGS).

The protein belongs to the Ycf4 family.

The protein resides in the plastid. Its subcellular location is the chloroplast thylakoid membrane. Its function is as follows. Seems to be required for the assembly of the photosystem I complex. The polypeptide is Photosystem I assembly protein Ycf4 (Physcomitrium patens (Spreading-leaved earth moss)).